The chain runs to 307 residues: 4-hydroxy-tetrahydrodipicolinate synthase (307 aa).

Thr-49 lines the pyruvate pocket. Catalysis depends on Tyr-138, which acts as the Proton donor/acceptor. Lys-166 serves as the catalytic Schiff-base intermediate with substrate. Ile-207 provides a ligand contact to pyruvate.

This sequence belongs to the DapA family. Homotetramer; dimer of dimers.

Its subcellular location is the cytoplasm. It catalyses the reaction L-aspartate 4-semialdehyde + pyruvate = (2S,4S)-4-hydroxy-2,3,4,5-tetrahydrodipicolinate + H2O + H(+). It functions in the pathway amino-acid biosynthesis; L-lysine biosynthesis via DAP pathway; (S)-tetrahydrodipicolinate from L-aspartate: step 3/4. Catalyzes the condensation of (S)-aspartate-beta-semialdehyde [(S)-ASA] and pyruvate to 4-hydroxy-tetrahydrodipicolinate (HTPA). This is 4-hydroxy-tetrahydrodipicolinate synthase from Limosilactobacillus reuteri (strain DSM 20016) (Lactobacillus reuteri).